We begin with the raw amino-acid sequence, 334 residues long: Fructose-1,6-bisphosphatase class 1 (334 aa).

Glutamate 91, aspartate 113, leucine 115, and aspartate 116 together coordinate Mg(2+). Substrate contacts are provided by residues 116–119 (DGSS), asparagine 208, and lysine 274. Position 280 (glutamate 280) interacts with Mg(2+).

The protein belongs to the FBPase class 1 family. In terms of assembly, homotetramer. Requires Mg(2+) as cofactor.

The protein resides in the cytoplasm. It carries out the reaction beta-D-fructose 1,6-bisphosphate + H2O = beta-D-fructose 6-phosphate + phosphate. Its pathway is carbohydrate biosynthesis; gluconeogenesis. In Janthinobacterium sp. (strain Marseille) (Minibacterium massiliensis), this protein is Fructose-1,6-bisphosphatase class 1.